Reading from the N-terminus, the 508-residue chain is Cobyric acid synthase (508 aa).

Positions 266–464 (SLRIAVVAYP…AHGLFESTEV (199 aa)) constitute a GATase cobBQ-type domain. Cysteine 347 serves as the catalytic Nucleophile. Residue histidine 456 is part of the active site.

Belongs to the CobB/CobQ family. CobQ subfamily.

It participates in cofactor biosynthesis; adenosylcobalamin biosynthesis. Its function is as follows. Catalyzes amidations at positions B, D, E, and G on adenosylcobyrinic A,C-diamide. NH(2) groups are provided by glutamine, and one molecule of ATP is hydrogenolyzed for each amidation. The polypeptide is Cobyric acid synthase (Methylibium petroleiphilum (strain ATCC BAA-1232 / LMG 22953 / PM1)).